The chain runs to 617 residues: Proline--tRNA ligase (617 aa).

This sequence belongs to the class-II aminoacyl-tRNA synthetase family. ProS type 1 subfamily. Homodimer.

The protein resides in the cytoplasm. The catalysed reaction is tRNA(Pro) + L-proline + ATP = L-prolyl-tRNA(Pro) + AMP + diphosphate. Functionally, catalyzes the attachment of proline to tRNA(Pro) in a two-step reaction: proline is first activated by ATP to form Pro-AMP and then transferred to the acceptor end of tRNA(Pro). As ProRS can inadvertently accommodate and process non-cognate amino acids such as alanine and cysteine, to avoid such errors it has two additional distinct editing activities against alanine. One activity is designated as 'pretransfer' editing and involves the tRNA(Pro)-independent hydrolysis of activated Ala-AMP. The other activity is designated 'posttransfer' editing and involves deacylation of mischarged Ala-tRNA(Pro). The misacylated Cys-tRNA(Pro) is not edited by ProRS. This Streptococcus pneumoniae (strain ATCC 700669 / Spain 23F-1) protein is Proline--tRNA ligase.